The sequence spans 481 residues: NADH-quinone oxidoreductase subunit N (481 aa).

The next 14 helical transmembrane spans lie at 11-31, 38-58, 74-94, 103-123, 128-148, 163-183, 208-228, 241-261, 272-292, 300-322, 332-352, 368-388, 404-424, and 450-470; these read ALPE…DLWA, WTHY…LAVW, GMSR…FVYA, IFKG…SVMV, FLTA…LIAL, FVLG…VYGA, LGLV…PFHM, VTAL…FRIL, WSLM…LAAI, MLAY…GAVG, TYAL…DGDN, VWLA…PPLM, GYVW…FYYL, and SLLS…QTVI.

The protein belongs to the complex I subunit 2 family. NDH-1 is composed of 14 different subunits. Subunits NuoA, H, J, K, L, M, N constitute the membrane sector of the complex.

The protein localises to the cell inner membrane. The catalysed reaction is a quinone + NADH + 5 H(+)(in) = a quinol + NAD(+) + 4 H(+)(out). Its function is as follows. NDH-1 shuttles electrons from NADH, via FMN and iron-sulfur (Fe-S) centers, to quinones in the respiratory chain. The immediate electron acceptor for the enzyme in this species is believed to be ubiquinone. Couples the redox reaction to proton translocation (for every two electrons transferred, four hydrogen ions are translocated across the cytoplasmic membrane), and thus conserves the redox energy in a proton gradient. The sequence is that of NADH-quinone oxidoreductase subunit N from Neisseria gonorrhoeae (strain ATCC 700825 / FA 1090).